The chain runs to 169 residues: MPRSQRNDNFIDKTFTLVADTSLQVIPTTQGEKKAFTYYRDGMSAQSEGEYAEASQNYYEAMRLEIDPYDRSYILHNIGLIHTSNGEHARALEYYFQALERNPSLPQAFNNMAVICHYRGEQAIQQGDFETSEAWFGKAADHWKQAVLLAPGNYIEAQNWLKITGRLKD.

TPR repeat units follow at residues 35–68, 72–105, and 120–153; these read AFTYYRDGMSAQSEGEYAEASQNYYEAMRLEIDP, SYILHNIGLIHTSNGEHARALEYYFQALERNPSL, and GEQAIQQGDFETSEAWFGKAADHWKQAVLLAPGN.

This sequence belongs to the Ycf3 family.

Its subcellular location is the plastid. The protein localises to the chloroplast thylakoid membrane. Essential for the assembly of the photosystem I (PSI) complex. May act as a chaperone-like factor to guide the assembly of the PSI subunits. This chain is Photosystem I assembly protein Ycf3, found in Huperzia lucidula (Shining clubmoss).